Reading from the N-terminus, the 60-residue chain is Large ribosomal subunit protein uL30 (60 aa).

This sequence belongs to the universal ribosomal protein uL30 family. In terms of assembly, part of the 50S ribosomal subunit.

This Ligilactobacillus salivarius (strain UCC118) (Lactobacillus salivarius) protein is Large ribosomal subunit protein uL30.